A 579-amino-acid polypeptide reads, in one-letter code: Nuclear receptor coactivator 5 (579 aa).

Met-1 is subject to N-acetylmethionine. Residues 1–78 (MNTAPSRPSP…LRDHRDSRSV (78 aa)) form a disordered region. The tract at residues 1-158 (MNTAPSRPSP…RDSFDGRGPP (158 aa)) is transcription repression. Thr-3 carries the post-translational modification Phosphothreonine. Phosphoserine occurs at positions 9, 21, 24, 29, and 34. Composition is skewed to basic and acidic residues over residues 11–62 (TRRD…DLRD) and 68–78 (DLRDHRDSRSV). 5 positions are modified to phosphoserine: Ser-96, Ser-116, Ser-126, Ser-143, and Ser-151. The segment at 148–173 (YRDSFDGRGPPGPESQSRAKERLKRE) is disordered. Residues 164–173 (SRAKERLKRE) show a composition bias toward basic and acidic residues. Thr-274 bears the Phosphothreonine mark. The LXXLL motif signature appears at 345 to 349 (LINLL). Disordered stretches follow at residues 375-428 (MRSS…PTSQ), 444-537 (VTAN…NFDN), and 560-579 (QTTA…QRHY). Position 378 is a phosphoserine (Ser-378). Residue Thr-379 is modified to Phosphothreonine. Ser-381 is subject to Phosphoserine. Residues 395-413 (SGASLKTQPSSQPLQSGQV) show a composition bias toward polar residues. Low complexity predominate over residues 446–457 (ANSSSASPSVAA). The interval 458 to 579 (GNTPNQNFST…APMGSYQRHY (122 aa)) is transcription activation. Composition is skewed to polar residues over residues 459-485 (NTPN…NQPP) and 520-537 (SNMT…NFDN).

In terms of assembly, binds HTATIP2/TIP30. Interacts with YLPM1. Forms a complex with ILF2, ILF3, YLPM1, KHDRBS1, RBMX and PPP1CA. In terms of tissue distribution, widely expressed.

Its subcellular location is the nucleus. Nuclear receptor coregulator that can have both coactivator and corepressor functions. Interacts with nuclear receptors for steroids (ESR1 and ESR2) independently of the steroid binding domain (AF-2) of the ESR receptors, and with the orphan nuclear receptor NR1D2. Involved in the coactivation of nuclear steroid receptors (ER) as well as the corepression of MYC in response to 17-beta-estradiol (E2). This chain is Nuclear receptor coactivator 5 (NCOA5), found in Homo sapiens (Human).